A 252-amino-acid polypeptide reads, in one-letter code: Hydrolase phiM (252 aa).

The active-site Charge relay system is the serine 126.

This sequence belongs to the LovG family.

It functions in the pathway secondary metabolite biosynthesis. Functionally, hydrolase; part of the gene cluster that mediates the biosynthesis of the antihypercholesterolemic agents phomoidrides which are dimeric anhydrides. Within the pathway, phiM releases the C12-fatty acyl chain from phiA. The pathway begins with the highly reducing polyketide synthase tstA that catalyzes the formation of a C12-fatty acyl-ACP, starting from one acetate and 5 malonate units. The hydrolase tstM is involved in the release of the C12-fatty acyl chain from phiA. The alkylcitrate synthase (ACS) tstJ and the alkylcitrate dehydratase (ACDH) tstI then give rise to decarboxylated monomeric anhydrides by coupling the C12-fatty acyl chain with oxalacetic acid. The cyclase tstC is responsible for the dimerization of the monomeric anhydrides which leads to the production of prephomoidride that contains the characteristic bicyclo[4.3.1]deca-1,6-diene system of phomoidrides. Iterative oxidation catalyzed by the alpha-ketoglutarate-dependent dioxygenase tstK produced then phomoidride A. Finally, the methyltransferase tstE converts phomoidride A to phomoidride B via an acetalization reaction. The phosphatidylethanolamine-binding protein tstB and tstN are not essential for dimerization and their functions have still to be determined. The sequence is that of Hydrolase phiM from Talaromyces stipitatus (strain ATCC 10500 / CBS 375.48 / QM 6759 / NRRL 1006) (Penicillium stipitatum).